A 1121-amino-acid chain; its full sequence is tRNA (34-2'-O)-methyltransferase regulator WDR6 (1121 aa).

Residue methionine 1 is modified to N-acetylmethionine. WD repeat units lie at residues 53–97 (IKRV…VVKI), 105–143 (WELWRSGLWNMSDWIWDARWLEGNIALALGHNSVVLYDP), 147–189 (CILQ…VWYP), 200–238 (APDRRISGHVGIIFSMSYLESKGLLATASEDRSVRIWKV), 247–285 (RVQNIGHCFGHSARVWQVKLLENYLISAGEDCVCLVWSH), 289–327 (ILQAFRGHQGRGIRAIAAHERQAWVITGGDDSGIRLWHL), 335–376 (LGVS…LYDV), 381–422 (WEQL…VVPI), 425–470 (PTAA…ISAA), 476–520 (IFVK…LFPS), 559–598 (PVSTLPSLHGKQGVTSVTCHGGYVYTTGRDGAYYQLFVRD), 604–642 (VLRQKSCRGMNWLAGLRIVPDGSMVILGFHANEFVVWNP), 645–684 (HEKLHIVNCGGGHRSWAFSDTEAAMAFAYLKDGDVMLYRA), 739–785 (LTDI…VWGI), 848–893 (RNRH…LFLL), 901–946 (QLLA…FWDL), 970–1012 (GTPS…VFVL), 1036–1073 (EEYSVPCAHAAHVTGLKILSPSIMVSASIDQRLTFWRL), and 1079–1121 (TFMN…NWYD).

It belongs to the WD repeat WDR6 family. As to quaternary structure, interacts with FTSJ1; the interaction is direct, and required for 2'-O-methylation of position 34 in substrate tRNAs. Interacts with IRS4. Interacts with STK11/LKB1. In terms of tissue distribution, ubiquitous.

Its subcellular location is the cytoplasm. In terms of biological role, together with methyltransferase FTSJ1, methylates the 2'-O-ribose of nucleotides at position 34 of the tRNA anticodon loop of substrate tRNAs. Required for the correct positioning of the substrate tRNA for methylation. Required to suppress amino acid starvation-induced autophagy. Enhances the STK11/LKB1-induced cell growth suppression activity. This chain is tRNA (34-2'-O)-methyltransferase regulator WDR6 (WDR6), found in Homo sapiens (Human).